A 233-amino-acid polypeptide reads, in one-letter code: VIGGDECDINEHRFLAFLYPGRFFCSGTLINQEWVLTVAHCDTISMRIYLGLHTRSVPNDDEEIRYPMEKFKCPNRKRSYIKDKDIMLIRLNRPVNDSPHIAPLSLPSNPPSVGSVCHVMGWGTTSPSKATYPDVPHCANINLVNDTMCHGAYNGLPVTSRKFCAGVLQGGIDTCVGDSGGPLICNGQFQGIVSWGGKVCARLPRPALYTKVFEYLPWIQSIIAGNTTATCPL.

Residues 1–224 (VIGGDECDIN…YLPWIQSIIA (224 aa)) form the Peptidase S1 domain. 6 disulfide bridges follow: C7-C138, C25-C41, C73-C231, C117-C185, C149-C164, and C175-C200. Residues H40 and D85 each act as charge relay system in the active site. S179 (charge relay system) is an active-site residue.

Belongs to the peptidase S1 family. Snake venom subfamily. Monomer. As to expression, expressed by the venom gland.

Its subcellular location is the secreted. In terms of biological role, snake venom serine protease that may act in the hemostasis system of the prey. In Bothrops alternatus (Urutu), this protein is Snake venom serine protease BthaTL.